The following is a 72-amino-acid chain: MARVTVEDCLDKVETRFDLVVLASMRANKILKNGYSESMENEKKEKATVVALREIAESEITPEQILRNEIEG.

It belongs to the RNA polymerase subunit omega family. The RNAP catalytic core consists of 2 alpha, 1 beta, 1 beta' and 1 omega subunit. When a sigma factor is associated with the core the holoenzyme is formed, which can initiate transcription.

The enzyme catalyses RNA(n) + a ribonucleoside 5'-triphosphate = RNA(n+1) + diphosphate. Functionally, promotes RNA polymerase assembly. Latches the N- and C-terminal regions of the beta' subunit thereby facilitating its interaction with the beta and alpha subunits. The sequence is that of DNA-directed RNA polymerase subunit omega from Francisella tularensis subsp. tularensis (strain FSC 198).